A 72-amino-acid polypeptide reads, in one-letter code: Translation initiation factor IF-1 (72 aa).

An S1-like domain is found at 1–72 (MAKEDSIEME…SKGRIVYRAR (72 aa)).

Belongs to the IF-1 family. Component of the 30S ribosomal translation pre-initiation complex which assembles on the 30S ribosome in the order IF-2 and IF-3, IF-1 and N-formylmethionyl-tRNA(fMet); mRNA recruitment can occur at any time during PIC assembly.

It is found in the cytoplasm. One of the essential components for the initiation of protein synthesis. Stabilizes the binding of IF-2 and IF-3 on the 30S subunit to which N-formylmethionyl-tRNA(fMet) subsequently binds. Helps modulate mRNA selection, yielding the 30S pre-initiation complex (PIC). Upon addition of the 50S ribosomal subunit IF-1, IF-2 and IF-3 are released leaving the mature 70S translation initiation complex. The polypeptide is Translation initiation factor IF-1 (Nitrosococcus oceani (strain ATCC 19707 / BCRC 17464 / JCM 30415 / NCIMB 11848 / C-107)).